Here is a 532-residue protein sequence, read N- to C-terminus: Aspartate--tRNA ligase 1, cytoplasmic (532 aa).

Residues 7–41 (LEECGEKISKKESKKRAAKLEKLLRKQEREEATSS) adopt a coiled-coil conformation. Residues 31-58 (RKQEREEATSSSLSLEEEDESCSSNYGD) are disordered. Residues 88 to 169 (VSIRGRLHKN…QVEIHVRKMY (82 aa)) constitute a DNA-binding region (OB). An L-aspartate-binding site is contributed by glutamate 260. The aspartate stretch occupies residues 282–285 (QLHK). Arginine 304 is an L-aspartate binding site. Residues 304–306 (RAE), 312–314 (RHL), and glutamate 455 contribute to the ATP site. Residues glutamate 455 and serine 458 each contribute to the Mg(2+) site. Positions 458 and 462 each coordinate L-aspartate. An ATP-binding site is contributed by 503 to 506 (GLER).

It belongs to the class-II aminoacyl-tRNA synthetase family. Type 2 subfamily.

The protein localises to the cytoplasm. It localises to the cytosol. The enzyme catalyses tRNA(Asp) + L-aspartate + ATP = L-aspartyl-tRNA(Asp) + AMP + diphosphate. Functionally, catalyzes the specific attachment of an amino acid to its cognate tRNA in a 2 step reaction: the amino acid (AA) is first activated by ATP to form AA-AMP and then transferred to the acceptor end of the tRNA. The protein is Aspartate--tRNA ligase 1, cytoplasmic of Arabidopsis thaliana (Mouse-ear cress).